The following is a 169-amino-acid chain: N-alpha-acetyltransferase 50 (169 aa).

Residues 6 to 155 (IELGDVTPHN…DAHVLQKNLK (150 aa)) form the N-acetyltransferase domain. Thr-12 is modified (phosphothreonine). Tyr-31 serves as a coordination point for substrate. Residues Lys-34 and Lys-37 each carry the N6-acetyllysine modification. The active site involves Tyr-73. Position 75 (Met-75) interacts with substrate. Acetyl-CoA is bound at residue 77–90 (LGCLAPYRRLGIGT). Tyr-110 is subject to Phosphotyrosine. His-112 is a catalytic residue. CoA is bound at residue 117–126 (NESAIDFYRK). The tract at residues 138–141 (YYKR) is substrate. Lys-140 carries the post-translational modification N6-acetyllysine.

Belongs to the acetyltransferase family. GNAT subfamily. In terms of assembly, component of the N-terminal acetyltransferase E (NatE) complex at least composed of NAA10, NAA15 and NAA50. Interacts with NAA10. Interacts with NAA15. Predominantly interacts with NAA15 in the N-terminal acetyltransferase A complex (NatA complex); the interactions reduce the acetylation activity of the NatA complex. Component of the N-terminal acetyltransferase E (NatE)/HYPK complex at least composed of NAA10, NAA15, NAA50 and HYPK. Within the complex interacts with NAA15. Its capacity to interact with the NatA complex is reduced by HYPK. Interacts with NAA35.

The protein localises to the cytoplasm. Its subcellular location is the nucleus. The catalysed reaction is N-terminal L-methionyl-L-alanyl-[protein] + acetyl-CoA = N-terminal N(alpha)-acetyl-L-methionyl-L-alanyl-[protein] + CoA + H(+). The enzyme catalyses N-terminal L-methionyl-L-seryl-[protein] + acetyl-CoA = N-terminal N(alpha)-acetyl-L-methionyl-L-seryl-[protein] + CoA + H(+). It carries out the reaction N-terminal L-methionyl-L-valyl-[protein] + acetyl-CoA = N-terminal N(alpha)-acetyl-L-methionyl-L-valyl-[protein] + CoA + H(+). It catalyses the reaction N-terminal L-methionyl-L-threonyl-[protein] + acetyl-CoA = N-terminal N(alpha)-acetyl-L-methionyl-L-threonyl-[protein] + CoA + H(+). The catalysed reaction is N-terminal L-methionyl-L-lysyl-[protein] + acetyl-CoA = N-terminal N(alpha)-acetyl-L-methionyl-L-lysyl-[protein] + CoA + H(+). The enzyme catalyses N-terminal L-methionyl-L-leucyl-[protein] + acetyl-CoA = N-terminal N(alpha)-acetyl-L-methionyl-L-leucyl-[protein] + CoA + H(+). It carries out the reaction N-terminal L-methionyl-L-phenylalanyl-[protein] + acetyl-CoA = N-terminal N(alpha)-acetyl-L-methionyl-L-phenylalanyl-[protein] + CoA + H(+). It catalyses the reaction N-terminal L-methionyl-L-tyrosyl-[protein] + acetyl-CoA = N-terminal N(alpha)-acetyl-L-methionyl-L-tyrosyl-[protein] + CoA + H(+). N-alpha-acetyltransferase that acetylates the N-terminus of proteins that retain their initiating methionine. Has a broad substrate specificity: able to acetylate the initiator methionine of most peptides, except for those with a proline in second position. Also displays N-epsilon-acetyltransferase activity by mediating acetylation of the side chain of specific lysines on proteins. Autoacetylates in vivo. The relevance of N-epsilon-acetyltransferase activity is however unclear: able to acetylate H4 in vitro, but this result has not been confirmed in vivo. Component of N-alpha-acetyltransferase complexes containing NAA10 and NAA15, which has N-alpha-acetyltransferase activity. Does not influence the acetyltransferase activity of NAA10. However, it negatively regulates the N-alpha-acetyltransferase activity of the N-terminal acetyltransferase A complex (also called the NatA complex). The multiprotein complexes probably constitute the major contributor for N-terminal acetylation at the ribosome exit tunnel, with NAA10 acetylating all amino termini that are devoid of methionine and NAA50 acetylating other peptides. Required for sister chromatid cohesion during mitosis by promoting binding of CDCA5/sororin to cohesin: may act by counteracting the function of NAA10. This chain is N-alpha-acetyltransferase 50 (NAA50), found in Bos taurus (Bovine).